A 372-amino-acid polypeptide reads, in one-letter code: L-selectin (372 aa).

Residues 1 to 28 (MIFPWKCQSTQRDLWNIFKLWGWTMLCC) form the signal peptide. A propeptide spanning residues 29 to 38 (DFLAHHGTDC) is cleaved from the precursor. At 39 to 332 (WTYHYSEKPM…FSMIKEGDYN (294 aa)) the chain is on the extracellular side. Positions 55-155 (RFCRDNYTDL…ACHKLKAALC (101 aa)) constitute a C-type lectin domain. Cystine bridges form between Cys-57/Cys-155, Cys-128/Cys-147, Cys-160/Cys-171, Cys-165/Cys-180, Cys-182/Cys-191, Cys-197/Cys-241, Cys-227/Cys-254, Cys-259/Cys-303, and Cys-289/Cys-316. 2 N-linked (GlcNAc...) asparagine glycosylation sites follow: Asn-60 and Asn-104. Residues Glu-118, Asn-120, Glu-126, Asn-143, and Asp-144 each contribute to the Ca(2+) site. The EGF-like domain occupies 156–192 (YTASCQPWSCSGHGECVEIINNYTCNCDVGYYGPQCQ). Residue Asn-177 is glycosylated (N-linked (GlcNAc...) asparagine). 2 consecutive Sushi domains span residues 195–256 (IQCE…TCQV) and 257–318 (IQCE…ICQK). 3 N-linked (GlcNAc...) asparagine glycosylation sites follow: Asn-232, Asn-246, and Asn-271. A helical transmembrane segment spans residues 333–355 (PLFIPVAVMVTAFSGLAFIIWLA). Residues 356 to 372 (RRLKKGKKSKRSMNDPY) are Cytoplasmic-facing.

The protein belongs to the selectin/LECAM family. Interaction with SELPLG/PSGL1 and PODXL2 is required for promoting recruitment and rolling of leukocytes. This interaction is dependent on the sialyl Lewis X glycan modification of SELPLG and PODXL2, and tyrosine sulfation modifications of SELPLG. Sulfation on 'Tyr-51' of SELPLG is important for L-selectin binding. N-glycosylated. As to expression, expressed in B-cell lines and T-lymphocytes.

The protein resides in the cell membrane. In terms of biological role, calcium-dependent lectin that mediates cell adhesion by binding to glycoproteins on neighboring cells. Mediates the adherence of lymphocytes to endothelial cells of high endothelial venules in peripheral lymph nodes. Promotes initial tethering and rolling of leukocytes in endothelia. The polypeptide is L-selectin (SELL) (Homo sapiens (Human)).